The following is an 89-amino-acid chain: Protein PerC (89 aa).

Transcriptional activator of eaeA/bfpA expression in enteropathogenic E.coli. This chain is Protein PerC (perC), found in Escherichia coli O111:H-.